The sequence spans 289 residues: Release factor glutamine methyltransferase (289 aa).

Residues 122 to 126, aspartate 145, tryptophan 174, and asparagine 189 contribute to the S-adenosyl-L-methionine site; that span reads GVGSG. Position 189 to 192 (189 to 192) interacts with substrate; the sequence is NPPY.

This sequence belongs to the protein N5-glutamine methyltransferase family. PrmC subfamily.

It carries out the reaction L-glutaminyl-[peptide chain release factor] + S-adenosyl-L-methionine = N(5)-methyl-L-glutaminyl-[peptide chain release factor] + S-adenosyl-L-homocysteine + H(+). Functionally, methylates the class 1 translation termination release factors RF1/PrfA and RF2/PrfB on the glutamine residue of the universally conserved GGQ motif. This chain is Release factor glutamine methyltransferase, found in Caulobacter vibrioides (strain ATCC 19089 / CIP 103742 / CB 15) (Caulobacter crescentus).